A 162-amino-acid chain; its full sequence is Probable chorismate pyruvate-lyase (162 aa).

Positions 54, 92, and 149 each coordinate substrate.

It belongs to the UbiC family.

It is found in the cytoplasm. The enzyme catalyses chorismate = 4-hydroxybenzoate + pyruvate. The protein operates within cofactor biosynthesis; ubiquinone biosynthesis. Its function is as follows. Removes the pyruvyl group from chorismate, with concomitant aromatization of the ring, to provide 4-hydroxybenzoate (4HB) for the ubiquinone pathway. This Methylococcus capsulatus (strain ATCC 33009 / NCIMB 11132 / Bath) protein is Probable chorismate pyruvate-lyase.